We begin with the raw amino-acid sequence, 287 residues long: Pentatricopeptide repeat-containing protein At4g18975, chloroplastic (287 aa).

The transit peptide at methionine 1–arginine 34 directs the protein to the chloroplast. 2 PPR repeats span residues threonine 165–serine 199 and proline 201–proline 235.

It belongs to the PPR family. P subfamily.

It localises to the plastid. The protein resides in the chloroplast. This chain is Pentatricopeptide repeat-containing protein At4g18975, chloroplastic, found in Arabidopsis thaliana (Mouse-ear cress).